The chain runs to 99 residues: Protein adenylyltransferase MntA (99 aa).

The short motif at 33–47 (GSYVRGEAKEDSDVD) is the GSX(10)DXD motif element. Active-site residues include Asp45 and Asp47. Mg(2+) is bound by residues Asp45, Asp47, and Asp77.

It belongs to the MntA antitoxin family. Requires Mg(2+) as cofactor.

It catalyses the reaction L-tyrosyl-[protein] + ATP = O-(5'-adenylyl)-L-tyrosyl-[protein] + diphosphate. It carries out the reaction O-(5'-adenylyl)-L-tyrosyl-[protein] + ATP = O-[5'-(adenylyl-(5'-&gt;3')-adenylyl)]-L-tyrosyl-[protein] + diphosphate. Its function is as follows. Antitoxin component of a type VII toxin-antitoxin (TA) system. Overexpression in E.coli neutralizes the toxic effect of cognate toxin HepT. Neutralization is mostly due to AMPylation of the toxin by this enzyme. This chain is Protein adenylyltransferase MntA, found in Thermococcus cleftensis (strain DSM 27260 / KACC 17922 / CL1).